The following is a 477-amino-acid chain: Membrane-bound lytic murein transglycosylase F (477 aa).

Positions 1–22 (MTRFLLIIILGFLLTACQQVTV) are cleaved as a signal peptide. Residues 23 to 257 (DEPEFVPHQL…HLNEKYFGHV (235 aa)) form a non-LT domain region. The segment at 258–477 (KRFDYIDTRA…AGSLSPDQPK (220 aa)) is LT domain. Glu-302 is an active-site residue. Residues 446-477 (SKQPMPEDEQNDLIAEELPSMPAGSLSPDQPK) form a disordered region. Positions 451–460 (PEDEQNDLIA) are enriched in acidic residues.

This sequence in the N-terminal section; belongs to the bacterial solute-binding protein 3 family. In the C-terminal section; belongs to the transglycosylase Slt family.

The protein localises to the cell outer membrane. The enzyme catalyses Exolytic cleavage of the (1-&gt;4)-beta-glycosidic linkage between N-acetylmuramic acid (MurNAc) and N-acetylglucosamine (GlcNAc) residues in peptidoglycan, from either the reducing or the non-reducing ends of the peptidoglycan chains, with concomitant formation of a 1,6-anhydrobond in the MurNAc residue.. Functionally, murein-degrading enzyme that degrades murein glycan strands and insoluble, high-molecular weight murein sacculi, with the concomitant formation of a 1,6-anhydromuramoyl product. Lytic transglycosylases (LTs) play an integral role in the metabolism of the peptidoglycan (PG) sacculus. Their lytic action creates space within the PG sacculus to allow for its expansion as well as for the insertion of various structures such as secretion systems and flagella. This Shewanella sp. (strain W3-18-1) protein is Membrane-bound lytic murein transglycosylase F.